The following is a 63-amino-acid chain: Large ribosomal subunit protein uL30 (63 aa).

It belongs to the universal ribosomal protein uL30 family. In terms of assembly, part of the 50S ribosomal subunit.

This is Large ribosomal subunit protein uL30 from Rickettsia typhi (strain ATCC VR-144 / Wilmington).